A 306-amino-acid polypeptide reads, in one-letter code: D-alanine--D-alanine ligase (306 aa).

Positions 107 to 300 constitute an ATP-grasp domain; that stretch reads KAAYRTAGLP…FGQLCAWLVE (194 aa). 134 to 184 provides a ligand contact to ATP; it reads IAPPYVVKPNNEGSSVGIYIVHEATNSPPQLSEEMPAQVMVEAYAPGREMT. Residues Asp251, Glu267, and Asn269 each coordinate Mg(2+).

It belongs to the D-alanine--D-alanine ligase family. Mg(2+) serves as cofactor. Mn(2+) is required as a cofactor.

Its subcellular location is the cytoplasm. The enzyme catalyses 2 D-alanine + ATP = D-alanyl-D-alanine + ADP + phosphate + H(+). Its pathway is cell wall biogenesis; peptidoglycan biosynthesis. Its function is as follows. Cell wall formation. The sequence is that of D-alanine--D-alanine ligase from Ruegeria sp. (strain TM1040) (Silicibacter sp.).